The primary structure comprises 113 residues: ECORI-T site protein ETM (113 aa).

The chain is ECORI-T site protein ETM (ETM) from Autographa californica nuclear polyhedrosis virus (AcMNPV).